Here is a 327-residue protein sequence, read N- to C-terminus: Delta(3,5)-Delta(2,4)-dienoyl-CoA isomerase, mitochondrial (327 aa).

Residues 1–33 (MATAMTVSSKLLGLLMQQLRGTRQLYFNVSLRS) constitute a mitochondrion transit peptide. Residues 115 to 119 (SGIDL) and G173 contribute to the substrate site. Position 230 is an N6-succinyllysine (K230). A Phosphoserine modification is found at S267. At K316 the chain carries N6-succinyllysine. Residues 325–327 (SKL) carry the Microbody targeting signal motif. K326 carries the post-translational modification N6-acetyllysine.

It belongs to the enoyl-CoA hydratase/isomerase family. Homohexamer. In terms of tissue distribution, expressed in heart and liver (at protein level).

It is found in the mitochondrion. Its subcellular location is the peroxisome. The catalysed reaction is (3E,5Z)-octadienoyl-CoA = (2E,4E)-octadienoyl-CoA. It catalyses the reaction (3E,5Z,8Z,11Z,14Z)-eicosapentaenoyl-CoA = (2E,4E,8Z,11Z,14Z)-eicosapentaenoyl-CoA. The protein operates within lipid metabolism; fatty acid beta-oxidation. Isomerization of 3-trans,5-cis-dienoyl-CoA to 2-trans,4-trans-dienoyl-CoA. The sequence is that of Delta(3,5)-Delta(2,4)-dienoyl-CoA isomerase, mitochondrial from Rattus norvegicus (Rat).